We begin with the raw amino-acid sequence, 210 residues long: Phosphoenolpyruvate guanylyltransferase (210 aa).

Phosphoenolpyruvate contacts are provided by threonine 130, glycine 146, and serine 149.

Belongs to the CofC family.

It carries out the reaction phosphoenolpyruvate + GTP + H(+) = enolpyruvoyl-2-diphospho-5'-guanosine + diphosphate. It participates in cofactor biosynthesis; coenzyme F420 biosynthesis. Guanylyltransferase that catalyzes the activation of phosphoenolpyruvate (PEP) as enolpyruvoyl-2-diphospho-5'-guanosine, via the condensation of PEP with GTP. It is involved in the biosynthesis of coenzyme F420, a hydride carrier cofactor. In Roseiflexus castenholzii (strain DSM 13941 / HLO8), this protein is Phosphoenolpyruvate guanylyltransferase.